The primary structure comprises 159 residues: Transcriptional repressor NrdR (159 aa).

The segment at 3–34 (CPFCNAADSKVIDSRLAAEGCQIRRRRECISC) is a zinc-finger region. The ATP-cone domain occupies 49–139 (PRVIKSNGKN…VYQDFQDVEA (91 aa)).

This sequence belongs to the NrdR family. Zn(2+) serves as cofactor.

Negatively regulates transcription of bacterial ribonucleotide reductase nrd genes and operons by binding to NrdR-boxes. The sequence is that of Transcriptional repressor NrdR from Acinetobacter baylyi (strain ATCC 33305 / BD413 / ADP1).